A 468-amino-acid polypeptide reads, in one-letter code: Tumor necrosis factor receptor superfamily member 10A (468 aa).

An N-terminal signal peptide occupies residues 1-23 (MAPPPARVHLGAFLAVTPNPGSA). A disordered region spans residues 17 to 82 (TPNPGSAASG…APGPRPAREA (66 aa)). Positions 20-34 (PGSAASGTEAAAATP) are enriched in low complexity. Residues 24–239 (ASGTEAAAAT…VHKESGNGHN (216 aa)) lie on the Extracellular side of the membrane. At arginine 52 the chain carries Omega-N-methylarginine. Over residues 63–74 (GPSARARAGRAP) the composition is skewed to low complexity. TNFR-Cys repeat units follow at residues 107–145 (SAAT…PGAC), 147–188 (RCTE…NTAC), and 189–229 (QCKP…DIEC). Disulfide bonds link cysteine 132/cysteine 145, cysteine 148/cysteine 164, cysteine 167/cysteine 180, cysteine 170/cysteine 188, cysteine 190/cysteine 204, cysteine 207/cysteine 221, and cysteine 211/cysteine 229. The N-linked (GlcNAc...) asparagine glycan is linked to asparagine 156. Residues 240–262 (IWVILVVTLVVPLLLVAVLIVCC) traverse the membrane as a helical segment. Topologically, residues 263-468 (CIGSGCGGDP…DGTGSAVSLE (206 aa)) are cytoplasmic. In terms of domain architecture, Death spans 365–448 (MLFFDKFANI…HAREKIQDLL (84 aa)). Serine 424, serine 463, and serine 466 each carry phosphoserine.

As to quaternary structure, monomer. Homooligomers and heterooligomers with TNFRSF10B. Three TNFRSF10A molecules interact with the TNFSF10 homotrimer. Can interact with TRADD and RIPK1. Interacts with ARAP1. In the absence of stimulation, interacts with BIRC2, DDX3X and GSK3B. The interaction with BIRC2 and DDX3X is further enhanced upon receptor stimulation and accompanied by DDX3X and BIRC2 cleavage. Interacts with ZDHHC3. Interacts with PTPN6; this interaction enables the inhibition of T-cell receptor signaling via LCK. In terms of assembly, (Microbial infection) Interacts with HCMV protein UL141; this interaction prevents TNFRSF10A cell surface expression. Palmitoylated. Palmitoylation of TNFRSF10A is required for its association with lipid rafts, oligomerization and function in TRAIL-induced cell death. Palmitoylated by ZDHHC3. As to expression, widely expressed. High levels are found in spleen, peripheral blood leukocytes, small intestine and thymus, but also in K-562 erythroleukemia cells, MCF-7 breast carcinoma cells and activated T-cells.

The protein resides in the cell membrane. It is found in the membrane raft. It localises to the cytoplasm. The protein localises to the cytosol. Its function is as follows. Receptor for the cytotoxic ligand TNFSF10/TRAIL. The adapter molecule FADD recruits caspase-8 to the activated receptor. The resulting death-inducing signaling complex (DISC) performs caspase-8 proteolytic activation which initiates the subsequent cascade of caspases (aspartate-specific cysteine proteases) mediating apoptosis. Promotes the activation of NF-kappa-B. The chain is Tumor necrosis factor receptor superfamily member 10A (TNFRSF10A) from Homo sapiens (Human).